The following is a 656-amino-acid chain: DNA ligase (656 aa).

Residues 32 to 36 (DAVYD) and 81 to 82 (SL) contribute to the NAD(+) site. The N6-AMP-lysine intermediate role is filled by Lys-112. NAD(+) contacts are provided by Arg-133, Glu-167, and Lys-306. Residues Cys-400, Cys-403, Cys-416, and Cys-421 each coordinate Zn(2+). Residues 577 to 656 (ESSSVFSNKT…ELLKRLKEFD (80 aa)) enclose the BRCT domain.

Belongs to the NAD-dependent DNA ligase family. LigA subfamily. Requires Mg(2+) as cofactor. It depends on Mn(2+) as a cofactor.

The catalysed reaction is NAD(+) + (deoxyribonucleotide)n-3'-hydroxyl + 5'-phospho-(deoxyribonucleotide)m = (deoxyribonucleotide)n+m + AMP + beta-nicotinamide D-nucleotide.. Its function is as follows. DNA ligase that catalyzes the formation of phosphodiester linkages between 5'-phosphoryl and 3'-hydroxyl groups in double-stranded DNA using NAD as a coenzyme and as the energy source for the reaction. It is essential for DNA replication and repair of damaged DNA. The polypeptide is DNA ligase (Helicobacter pylori (strain Shi470)).